A 333-amino-acid chain; its full sequence is Mitochondrial fission regulator 1 (333 aa).

Residues 1-48 (MLGWIKRLIRMVFQQVGVSMQSVLWSRKPYGSSRSIVRKIGTNLSLIQ) constitute a mitochondrion transit peptide. Position 119 is a phosphoserine (S119). Residues 137 to 169 (NEEALQKICALENELAALRAQIAKIVTQQEQQN) adopt a coiled-coil conformation. 2 disordered regions span residues 177-198 (STTFGTIPPHPPPPPPPLPPPA) and 288-315 (SDSQDEVEKGIPKSESEATSERVLFGPH). The necessary and sufficient to promote mitochondrial fission stretch occupies residues 179–304 (TFGTIPPHPP…EKGIPKSESE (126 aa)). Over residues 184 to 198 (PPHPPPPPPPLPPPA) the composition is skewed to pro residues. A compositionally biased stretch (basic and acidic residues) spans 288–307 (SDSQDEVEKGIPKSESEATS).

This sequence belongs to the MTFR1 family.

The protein resides in the mitochondrion. Functionally, may play a role in mitochondrial aerobic respiration. May also regulate mitochondrial organization and fission. This Homo sapiens (Human) protein is Mitochondrial fission regulator 1 (MTFR1).